Consider the following 494-residue polypeptide: Keratin, type I cytoskeletal 12 (494 aa).

A compositionally biased stretch (polar residues) spans 1–12; sequence MDLSNNTMSLSV. The segment at 1-32 is disordered; sequence MDLSNNTMSLSVRTPGLSRRLSSQSVIGRPRG. Residues 1–124 form a head region; sequence MDLSNNTMSL…GNDGGLLSGS (124 aa). The segment at 125-160 is coil 1A; sequence EKETMQNLNDRLASYLDKVRALEEANTELENKIREW. Positions 125 to 440 constitute an IF rod domain; sequence EKETMQNLND…RLLDGEAQGD (316 aa). A linker 1 region spans residues 164–182; it reads RGTGTADASQSDYSKYYPL. Residues 183 to 274 are coil 1B; the sequence is IEDLRNKIIS…KNHEDELQSF (92 aa). Residues 275-297 form a linker 12 region; it reads RVGGPGEVSVEMDAAPGVDLTRL. The segment at 298–435 is coil 2; it reads LNDMRAQYET…IETYRRLLDG (138 aa). Residues 436–494 are tail; sequence EAQGDGLEESLFVTDSKSQAQSTDSSKDPTKTRKIKTVVQEMVNGEVVSSQVQEIEELM. A disordered region spans residues 446–468; that stretch reads LFVTDSKSQAQSTDSSKDPTKTR. The span at 448 to 459 shows a compositional bias: polar residues; the sequence is VTDSKSQAQSTD.

The protein belongs to the intermediate filament family. Heterotetramer of two type I and two type II keratins. Keratin-3 associates with keratin-12. As to expression, expressed in the corneal epithelium (at protein level).

Functionally, involved in corneal epithelium organization, integrity and corneal keratin expression. This chain is Keratin, type I cytoskeletal 12 (KRT12), found in Homo sapiens (Human).